A 307-amino-acid chain; its full sequence is Ras-related protein Rab-33 (307 aa).

The disordered stretch occupies residues 19–80 (VIDPPKHVTA…IPPAPEAVTA (62 aa)). 2 stretches are compositionally biased toward pro residues: residues 42–56 (PTHP…PAVP) and 65–75 (PTAPPPIPPAP). A GTP-binding site is contributed by 107–114 (GNAAVGKT). Residues 129-137 (TEATIGVDF) carry the Effector region motif. GTP contacts are provided by residues 155–159 (DTAGQ) and 217–220 (NKCD). 2 S-geranylgeranyl cysteine lipidation sites follow: Cys-306 and Cys-307.

Belongs to the small GTPase superfamily. Rab family.

The protein localises to the cell membrane. The polypeptide is Ras-related protein Rab-33 (rab-33) (Caenorhabditis elegans).